The following is a 505-amino-acid chain: Trans-cinnamate 4-monooxygenase (505 aa).

Residues 3–23 (LLLLEKTLLGLFLAAVVAIVV) form a helical membrane-spanning segment. (E)-cinnamate is bound by residues 213–218 (RSRLAQ) and Ala306. Cys447 lines the heme pocket.

Belongs to the cytochrome P450 family. Heme serves as cofactor.

The protein resides in the membrane. The catalysed reaction is (E)-cinnamate + reduced [NADPH--hemoprotein reductase] + O2 = (E)-4-coumarate + oxidized [NADPH--hemoprotein reductase] + H2O + H(+). It participates in phenylpropanoid metabolism; trans-4-coumarate biosynthesis; trans-4-coumarate from trans-cinnamate: step 1/1. Catalyzes the first oxidative step of the phenylpropanoid pathway in higher plants by transforming trans-cinnamate into p-coumarate. The compounds formed by this pathway are essential components for lignification, pollination, and defense against ultraviolet light, predators and pathogens. The sequence is that of Trans-cinnamate 4-monooxygenase (CYP73A2) from Vigna radiata var. radiata (Mung bean).